The primary structure comprises 211 residues: Uridine kinase (211 aa).

Residue 12-19 (GGSGSGKT) participates in ATP binding.

The protein belongs to the uridine kinase family.

It is found in the cytoplasm. The catalysed reaction is uridine + ATP = UMP + ADP + H(+). It catalyses the reaction cytidine + ATP = CMP + ADP + H(+). It participates in pyrimidine metabolism; CTP biosynthesis via salvage pathway; CTP from cytidine: step 1/3. It functions in the pathway pyrimidine metabolism; UMP biosynthesis via salvage pathway; UMP from uridine: step 1/1. The chain is Uridine kinase from Anoxybacillus flavithermus (strain DSM 21510 / WK1).